Reading from the N-terminus, the 329-residue chain is Biotin synthase (329 aa).

One can recognise a Radical SAM core domain in the interval 38-262; sequence NTIQVSTLLS…IMPHSYIRLS (225 aa). 3 residues coordinate [4Fe-4S] cluster: Cys53, Cys57, and Cys60. 4 residues coordinate [2Fe-2S] cluster: Cys97, Cys128, Cys188, and Arg260.

The protein belongs to the radical SAM superfamily. Biotin synthase family. As to quaternary structure, homodimer. [4Fe-4S] cluster serves as cofactor. [2Fe-2S] cluster is required as a cofactor.

The enzyme catalyses (4R,5S)-dethiobiotin + (sulfur carrier)-SH + 2 reduced [2Fe-2S]-[ferredoxin] + 2 S-adenosyl-L-methionine = (sulfur carrier)-H + biotin + 2 5'-deoxyadenosine + 2 L-methionine + 2 oxidized [2Fe-2S]-[ferredoxin]. Its pathway is cofactor biosynthesis; biotin biosynthesis; biotin from 7,8-diaminononanoate: step 2/2. Functionally, catalyzes the conversion of dethiobiotin (DTB) to biotin by the insertion of a sulfur atom into dethiobiotin via a radical-based mechanism. This chain is Biotin synthase, found in Acinetobacter baumannii (strain SDF).